Reading from the N-terminus, the 225-residue chain is UPF0758 protein BCE_4545 (225 aa).

The MPN domain occupies 103–225; that stretch reads SIRSPEDCAT…FVSLKEKGHI (123 aa). His174, His176, and Asp187 together coordinate Zn(2+). A JAMM motif motif is present at residues 174–187; the sequence is HNHPSGDPAPSRED.

It belongs to the UPF0758 family.

The chain is UPF0758 protein BCE_4545 from Bacillus cereus (strain ATCC 10987 / NRS 248).